A 110-amino-acid chain; its full sequence is Phosphoribosyl-ATP pyrophosphatase (110 aa).

Belongs to the PRA-PH family.

The protein localises to the cytoplasm. The enzyme catalyses 1-(5-phospho-beta-D-ribosyl)-ATP + H2O = 1-(5-phospho-beta-D-ribosyl)-5'-AMP + diphosphate + H(+). Its pathway is amino-acid biosynthesis; L-histidine biosynthesis; L-histidine from 5-phospho-alpha-D-ribose 1-diphosphate: step 2/9. This chain is Phosphoribosyl-ATP pyrophosphatase, found in Clostridium botulinum (strain Kyoto / Type A2).